Reading from the N-terminus, the 1351-residue chain is ABC transporter C family member 6 (1351 aa).

In terms of domain architecture, ABC transmembrane type-1 1 spans 112-397 (NKYALVSNLF…LPYDIFKAIG (286 aa)). The next 3 helical transmembrane spans lie at 120–140 (LFIIIFTFLSPICLKFLINYI), 149–169 (SILKGILLCCLLCLCVLGQSI), and 248–268 (LLCYVVGPSGLVGFGVMVIAL). An ABC transporter 1 domain is found at 474–700 (NQDESINKKE…GIDFKSILKT (227 aa)). Position 510 to 517 (510 to 517 (GVVGSGKT)) interacts with ATP. Residues 701–734 (KEIKKNVENETDSEELIKNEIEIENEIIDVNNAI) are a coiled coil. 6 consecutive transmembrane segments (helical) span residues 771–791 (GSSGVTLFITISLFFVGQAIF), 815–835 (IGYYLLIFGTFVVILMIRILL), 904–924 (LISIVFIIPIMVIPLIILSIA), 977–999 (MFDNININLGCFFYSFAVHRWVS), 1002–1022 (LEVMGWIMVFFTSLIATLFIS), and 1025–1045 (GLAALSVTTALSLNGYLSWGI). Residues 777–1060 (LFITISLFFV…LEVKMNSFQR (284 aa)) enclose the ABC transmembrane type-1 2 domain. Positions 1101–1336 (IEFKNVEIKY…PNSKFNKLIK (236 aa)) constitute an ABC transporter 2 domain. Residue 1135 to 1142 (GRTGAGKT) coordinates ATP.

Belongs to the ABC transporter superfamily. ABCC family. Conjugate transporter (TC 3.A.1.208) subfamily.

It localises to the membrane. In Dictyostelium discoideum (Social amoeba), this protein is ABC transporter C family member 6 (abcC6).